The following is a 209-amino-acid chain: Small ribosomal subunit protein uS4 (209 aa).

A compositionally biased stretch (basic residues) spans 1-13; sequence MSTKSRTRSKTRL. 2 disordered regions span residues 1-20 and 28-49; these read MSTKSRTRSKTRLSRALGIP and YLEKRPYAPGEHGRSKRKQDSD. The 82-residue stretch at 95 to 176 folds into the S4 RNA-binding domain; sequence QRLDALVVRS…PKLPSYLEVE (82 aa).

The protein belongs to the universal ribosomal protein uS4 family. Part of the 30S ribosomal subunit. Contacts protein S5. The interaction surface between S4 and S5 is involved in control of translational fidelity.

Functionally, one of the primary rRNA binding proteins, it binds directly to 16S rRNA where it nucleates assembly of the body of the 30S subunit. Its function is as follows. With S5 and S12 plays an important role in translational accuracy. The polypeptide is Small ribosomal subunit protein uS4 (Clavibacter michiganensis subsp. michiganensis (strain NCPPB 382)).